The chain runs to 324 residues: Dolichyl-phosphate beta-glucosyltransferase (324 aa).

The Lumenal portion of the chain corresponds to 1-7 (MAPLLLQ). A helical; Signal-anchor for type II membrane protein transmembrane segment spans residues 8–28 (LAVLGAALAAAALVLISIVAF). The Cytoplasmic portion of the chain corresponds to 29-324 (TTATKMPALH…WRLEQTRKMN (296 aa)).

The protein belongs to the glycosyltransferase 2 family. As to expression, expressed in pancreas, placenta, liver, heart, brain, kidney, skeletal muscle, and lung.

The protein localises to the endoplasmic reticulum membrane. It catalyses the reaction a di-trans,poly-cis-dolichyl phosphate + UDP-alpha-D-glucose = a di-trans,poly-cis-dolichyl beta-D-glucosyl phosphate + UDP. It participates in protein modification; protein glycosylation. In terms of biological role, dolichyl-phosphate beta-glucosyltransferase that operates in the biosynthetic pathway of dolichol-linked oligosaccharides, the glycan precursors employed in protein asparagine (N)-glycosylation. The assembly of dolichol-linked oligosaccharides begins on the cytosolic side of the endoplasmic reticulum membrane and finishes in its lumen. The sequential addition of sugars to dolichol pyrophosphate produces dolichol-linked oligosaccharides containing fourteen sugars, including two GlcNAcs, nine mannoses and three glucoses. Once assembled, the oligosaccharide is transferred from the lipid to nascent proteins by oligosaccharyltransferases. Dolichyl-phosphate beta-glucosyltransferase produces dolichyl beta-D-glucosyl phosphate/Dol-P-Glc, the glucose donor substrate used sequentially by ALG6, ALG8 and ALG10 to add glucose residues on top of the Man(9)GlcNAc(2)-PP-Dol structure. These are the three last steps in the biosynthetic pathway of dolichol-linked oligosaccharides to produce Glc(3)Man(9)GlcNAc(2)-PP-Dol. The enzyme is most probably active on the cytoplasmic side of the endoplasmic reticulum while its product Dol-P-Glc is the substrate for ALG6, ALG8 and ALG11 in the lumen of the endoplasmic reticulum. This is Dolichyl-phosphate beta-glucosyltransferase from Homo sapiens (Human).